Reading from the N-terminus, the 348-residue chain is UDP-3-O-acylglucosamine N-acyltransferase (348 aa).

His-241 acts as the Proton acceptor in catalysis.

The protein belongs to the transferase hexapeptide repeat family. LpxD subfamily. As to quaternary structure, homotrimer.

It carries out the reaction a UDP-3-O-[(3R)-3-hydroxyacyl]-alpha-D-glucosamine + a (3R)-hydroxyacyl-[ACP] = a UDP-2-N,3-O-bis[(3R)-3-hydroxyacyl]-alpha-D-glucosamine + holo-[ACP] + H(+). Its pathway is bacterial outer membrane biogenesis; LPS lipid A biosynthesis. Its function is as follows. Catalyzes the N-acylation of UDP-3-O-acylglucosamine using 3-hydroxyacyl-ACP as the acyl donor. Is involved in the biosynthesis of lipid A, a phosphorylated glycolipid that anchors the lipopolysaccharide to the outer membrane of the cell. The polypeptide is UDP-3-O-acylglucosamine N-acyltransferase (Neisseria meningitidis serogroup C / serotype 2a (strain ATCC 700532 / DSM 15464 / FAM18)).